The chain runs to 268 residues: Energy-coupling factor transporter transmembrane protein EcfT (268 aa).

5 helical membrane-spanning segments follow: residues 29-49, 75-95, 107-127, 152-172, and 242-262; these read VFIF…TVAV, IIIV…EVIV, LIEG…ASLL, LPTH…PTLI, and WGLK…AVMA.

Belongs to the energy-coupling factor EcfT family. Forms a stable energy-coupling factor (ECF) transporter complex composed of 2 membrane-embedded substrate-binding proteins (S component), 2 ATP-binding proteins (A component) and 2 transmembrane proteins (T component). May be able to interact with more than 1 S component at a time.

The protein resides in the cell membrane. Its function is as follows. Transmembrane (T) component of an energy-coupling factor (ECF) ABC-transporter complex. Unlike classic ABC transporters this ECF transporter provides the energy necessary to transport a number of different substrates. The chain is Energy-coupling factor transporter transmembrane protein EcfT from Bacillus selenitireducens (strain ATCC 700615 / DSM 15326 / MLS10).